The chain runs to 215 residues: Adenylate kinase (215 aa).

10 to 15 (GAGKGT) is an ATP binding site. Residues 30-59 (STGDIFRDAVNQGSELGQEAQKYMSSGQLV) are NMP. AMP contacts are provided by residues Thr-31, Arg-36, 57 to 59 (QLV), 85 to 88 (GFPR), and Gln-92. The interval 126–163 (GRISCRECKRVYNLNFNPPREQGKCDSCGGELVQRNDD) is LID. Arg-127 lines the ATP pocket. Residues Cys-130 and Cys-133 each coordinate Zn(2+). 136 to 137 (VY) is an ATP binding site. Zn(2+) is bound by residues Cys-150 and Cys-153. AMP is bound by residues Arg-160 and Arg-171. Arg-199 contributes to the ATP binding site.

It belongs to the adenylate kinase family. As to quaternary structure, monomer.

It localises to the cytoplasm. The catalysed reaction is AMP + ATP = 2 ADP. It functions in the pathway purine metabolism; AMP biosynthesis via salvage pathway; AMP from ADP: step 1/1. In terms of biological role, catalyzes the reversible transfer of the terminal phosphate group between ATP and AMP. Plays an important role in cellular energy homeostasis and in adenine nucleotide metabolism. This Syntrophomonas wolfei subsp. wolfei (strain DSM 2245B / Goettingen) protein is Adenylate kinase.